Consider the following 342-residue polypeptide: Uroporphyrinogen decarboxylase (342 aa).

Residues 22–26, F41, D72, Y146, S201, and H317 contribute to the substrate site; that span reads RQAGR.

It belongs to the uroporphyrinogen decarboxylase family. As to quaternary structure, homodimer.

Its subcellular location is the cytoplasm. The catalysed reaction is uroporphyrinogen III + 4 H(+) = coproporphyrinogen III + 4 CO2. The protein operates within porphyrin-containing compound metabolism; protoporphyrin-IX biosynthesis; coproporphyrinogen-III from 5-aminolevulinate: step 4/4. Its function is as follows. Catalyzes the decarboxylation of four acetate groups of uroporphyrinogen-III to yield coproporphyrinogen-III. In Orientia tsutsugamushi (strain Boryong) (Rickettsia tsutsugamushi), this protein is Uroporphyrinogen decarboxylase.